The sequence spans 356 residues: Protein RecA (356 aa).

77 to 84 is an ATP binding site; the sequence is GPESSGKT.

This sequence belongs to the RecA family.

The protein resides in the cytoplasm. Its function is as follows. Can catalyze the hydrolysis of ATP in the presence of single-stranded DNA, the ATP-dependent uptake of single-stranded DNA by duplex DNA, and the ATP-dependent hybridization of homologous single-stranded DNAs. It interacts with LexA causing its activation and leading to its autocatalytic cleavage. The protein is Protein RecA of Caulobacter vibrioides (strain ATCC 19089 / CIP 103742 / CB 15) (Caulobacter crescentus).